The following is a 144-amino-acid chain: HTH-type transcriptional regulator LrpC (144 aa).

One can recognise an HTH asnC-type domain in the interval 3-64; sequence LDQIDLNIIE…EVDQKKLGLP (62 aa). The segment at residues 22-41 is a DNA-binding region (H-T-H motif); sequence MRELGRKIKLSPPSVTERVR.

In terms of biological role, transcriptional regulator with a possible role in regulation of amino acid metabolism. Plays a role in the growth phase transition. The polypeptide is HTH-type transcriptional regulator LrpC (lrpC) (Bacillus subtilis (strain 168)).